The following is a 324-amino-acid chain: Thiazole synthase (324 aa).

Lysine 167 serves as the catalytic Schiff-base intermediate with DXP. 1-deoxy-D-xylulose 5-phosphate contacts are provided by residues glycine 228, alanine 254–glycine 255, and asparagine 276–threonine 277.

The protein belongs to the ThiG family. Homotetramer. Forms heterodimers with either ThiH or ThiS.

It localises to the cytoplasm. The enzyme catalyses [ThiS sulfur-carrier protein]-C-terminal-Gly-aminoethanethioate + 2-iminoacetate + 1-deoxy-D-xylulose 5-phosphate = [ThiS sulfur-carrier protein]-C-terminal Gly-Gly + 2-[(2R,5Z)-2-carboxy-4-methylthiazol-5(2H)-ylidene]ethyl phosphate + 2 H2O + H(+). The protein operates within cofactor biosynthesis; thiamine diphosphate biosynthesis. In terms of biological role, catalyzes the rearrangement of 1-deoxy-D-xylulose 5-phosphate (DXP) to produce the thiazole phosphate moiety of thiamine. Sulfur is provided by the thiocarboxylate moiety of the carrier protein ThiS. In vitro, sulfur can be provided by H(2)S. This Paramagnetospirillum magneticum (strain ATCC 700264 / AMB-1) (Magnetospirillum magneticum) protein is Thiazole synthase.